Here is a 584-residue protein sequence, read N- to C-terminus: Glutathione hydrolase proenzyme (584 aa).

The first 25 residues, 1–25 (MAPAAMNLLCTVLYLLSSFAQVSDA), serve as a signal peptide directing secretion. Asparagine 111 is a glycosylation site (N-linked (GlcNAc...) asparagine). Arginine 120 contributes to the L-glutamate binding site. N-linked (GlcNAc...) asparagine glycosylation is found at asparagine 135, asparagine 262, asparagine 272, asparagine 350, and asparagine 370. Threonine 395 serves as the catalytic Nucleophile. L-glutamate-binding positions include threonine 413, glutamate 434, and 465–466 (SS). N-linked (GlcNAc...) asparagine glycosylation occurs at asparagine 547.

Belongs to the gamma-glutamyltransferase family. Heterodimer composed of the light and heavy chains. The active site is located in the light chain. Post-translationally, cleaved by autocatalysis into a large and a small subunit and the autocatalytic cleavage is essential to the functional activation of the enzyme.

Its subcellular location is the secreted. The catalysed reaction is an N-terminal (5-L-glutamyl)-[peptide] + an alpha-amino acid = 5-L-glutamyl amino acid + an N-terminal L-alpha-aminoacyl-[peptide]. It catalyses the reaction glutathione + H2O = L-cysteinylglycine + L-glutamate. The enzyme catalyses an S-substituted glutathione + H2O = an S-substituted L-cysteinylglycine + L-glutamate. It carries out the reaction leukotriene C4 + H2O = leukotriene D4 + L-glutamate. Its pathway is sulfur metabolism; glutathione metabolism. Cleaves the gamma-glutamyl bond of extracellular glutathione (gamma-Glu-Cys-Gly), glutathione conjugates, and other gamma-glutamyl compounds. The metabolism of glutathione releases free glutamate and the dipeptide cysteinyl-glycine, which is hydrolyzed to cysteine and glycine by dipeptidases. In the presence of high concentrations of dipeptides and some amino acids, can also catalyze a transpeptidation reaction, transferring the gamma-glutamyl moiety to an acceptor amino acid to form a new gamma-glutamyl compound. Initiates extracellular glutathione (GSH) breakdown, provides cells with a local cysteine supply and contributes to maintain intracellular GSH level. It is part of the cell antioxidant defense mechanism. The polypeptide is Glutathione hydrolase proenzyme (Arthroderma benhamiae (strain ATCC MYA-4681 / CBS 112371) (Trichophyton mentagrophytes)).